A 70-amino-acid polypeptide reads, in one-letter code: Cuticle protein 16 isoform b (70 aa).

The chain is Cuticle protein 16 isoform b from Limulus polyphemus (Atlantic horseshoe crab).